The chain runs to 851 residues: DNA mismatch repair protein MutS (851 aa).

Position 602 to 609 (602 to 609) interacts with ATP; the sequence is GPNMSGKS.

The protein belongs to the DNA mismatch repair MutS family.

In terms of biological role, this protein is involved in the repair of mismatches in DNA. It is possible that it carries out the mismatch recognition step. This protein has a weak ATPase activity. This Streptococcus pyogenes serotype M28 (strain MGAS6180) protein is DNA mismatch repair protein MutS.